Reading from the N-terminus, the 267-residue chain is NAD kinase (267 aa).

The active-site Proton acceptor is Asp-45. Residues 45–46, 121–122, Lys-147, Asp-149, 160–165, and Ala-184 each bind NAD(+); these read DG, NE, and TAYSKS.

Belongs to the NAD kinase family. A divalent metal cation serves as cofactor.

The protein resides in the cytoplasm. The enzyme catalyses NAD(+) + ATP = ADP + NADP(+) + H(+). Involved in the regulation of the intracellular balance of NAD and NADP, and is a key enzyme in the biosynthesis of NADP. Catalyzes specifically the phosphorylation on 2'-hydroxyl of the adenosine moiety of NAD to yield NADP. This is NAD kinase from Lactobacillus gasseri (strain ATCC 33323 / DSM 20243 / BCRC 14619 / CIP 102991 / JCM 1131 / KCTC 3163 / NCIMB 11718 / NCTC 13722 / AM63).